We begin with the raw amino-acid sequence, 297 residues long: 4-hydroxybenzoate octaprenyltransferase (297 aa).

The next 9 helical transmembrane spans lie at 29–49 (IGTY…AEGV), 55–75 (LFIF…VNDF), 102–122 (AWTL…LTNA), 124–141 (TVYL…YPFM), 146–166 (FYPQ…AFTA), 169–189 (GSLP…TVAY), 219–239 (VIIV…GVRF), 241–261 (LGQW…WEFW), and 270–290 (VCFK…AGIV).

The protein belongs to the UbiA prenyltransferase family. Mg(2+) serves as cofactor.

Its subcellular location is the cell inner membrane. It catalyses the reaction all-trans-octaprenyl diphosphate + 4-hydroxybenzoate = 4-hydroxy-3-(all-trans-octaprenyl)benzoate + diphosphate. It participates in cofactor biosynthesis; ubiquinone biosynthesis. In terms of biological role, catalyzes the prenylation of para-hydroxybenzoate (PHB) with an all-trans polyprenyl group. Mediates the second step in the final reaction sequence of ubiquinone-8 (UQ-8) biosynthesis, which is the condensation of the polyisoprenoid side chain with PHB, generating the first membrane-bound Q intermediate 3-octaprenyl-4-hydroxybenzoate. This is 4-hydroxybenzoate octaprenyltransferase from Stutzerimonas stutzeri (strain A1501) (Pseudomonas stutzeri).